An 805-amino-acid polypeptide reads, in one-letter code: Leucine--tRNA ligase (805 aa).

Positions 40–51 (PYPSGQGLHVGH) match the 'HIGH' region motif. The short motif at 577-581 (KMSKS) is the 'KMSKS' region element. ATP is bound at residue lysine 580.

Belongs to the class-I aminoacyl-tRNA synthetase family.

The protein resides in the cytoplasm. It catalyses the reaction tRNA(Leu) + L-leucine + ATP = L-leucyl-tRNA(Leu) + AMP + diphosphate. The sequence is that of Leucine--tRNA ligase from Pediococcus pentosaceus (strain ATCC 25745 / CCUG 21536 / LMG 10740 / 183-1w).